The primary structure comprises 387 residues: EARP-interacting protein homolog (387 aa).

4 WD repeats span residues 132–172, 182–222, 226–266, and 270–310; these read TAHG…TKSV, KGQL…QIYC, AHGQ…EPVK, and EHSH…SEPF. A disordered region spans residues 311-339; the sequence is GHLVDDEDLSDQEDNPQEEKTKEPLQDSI. The span at 315–326 shows a compositional bias: acidic residues; it reads DDEDLSDQEDNP. A WD 5 repeat occupies 345–385; sequence EHEDSVYAVEWSSADPWLFASLSYDGRLVINRVPRALKYNI.

It belongs to the WD repeat EIPR1 family.

The protein localises to the golgi apparatus. It localises to the trans-Golgi network. Functionally, may act as a component of endosomal retrieval machinery that is involved in protein transport from early endosomes to either recycling endosomes or the trans-Golgi network. The chain is EARP-interacting protein homolog from Xenopus laevis (African clawed frog).